We begin with the raw amino-acid sequence, 601 residues long: MKLSSLPSGLGLASLLGLISSATAYSATDLTTMYDWNQIIKPLEWGQLNFIHTTDTHGWLGGHLRDARYKADFGEFKSFALRMKELADFKGVDLLMVDTGDLHDGNGLSDASDPQGIYTNNIFTYLPYDILTIGNHELYQAAISNNTHEYFVPHWNGTYLASNVQIYNSSNELEQFGGESTYFITKHGVRTLAMGFLFNFSSNANNTVVTPVETAIKSEWYQQQINRTDVDLFLLIGHIPVRDYDEWKSLHASIRKVHPNTPIQILGGHSHIRDFAVYDEASVSLEGGRYCETVGWLSIDGLSASNATRQYVGRPVTNETRQSYPNLPKPATPLYYTRRYIDFNRQNFRFHTQQSEDSFDTPEGVELSKVIKQYRDDLNLSYVFGCIPKNYYMTEVSPQAEDSIFKLMVDHILPEVLVNENRSSVPHIIISNGGGVRGSMYEGTFGPDEMFQLNPFLTNYYNYIPDVPYKYAKKLYSILNGGSTLRNVNDYLAALNPGYVTSDDFGEDGDDTVHTYVSTYAVPNVLQAQVGFNTTSAPETVDVVFLNYFQTKVLKALNTMVNETIYTLSNVTQYWVREDGKDSSPYMFAQYVQQEWSDYCD.

An N-terminal signal peptide occupies residues 1–24 (MKLSSLPSGLGLASLLGLISSATA).

It localises to the membrane. This is an uncharacterized protein from Schizosaccharomyces pombe (strain 972 / ATCC 24843) (Fission yeast).